The sequence spans 104 residues: Urease subunit beta (104 aa).

Belongs to the urease beta subunit family. As to quaternary structure, heterotrimer of UreA (gamma), UreB (beta) and UreC (alpha) subunits. Three heterotrimers associate to form the active enzyme.

It is found in the cytoplasm. It catalyses the reaction urea + 2 H2O + H(+) = hydrogencarbonate + 2 NH4(+). It functions in the pathway nitrogen metabolism; urea degradation; CO(2) and NH(3) from urea (urease route): step 1/1. The protein is Urease subunit beta of Mycobacterium bovis (strain BCG / Pasteur 1173P2).